Here is a 515-residue protein sequence, read N- to C-terminus: Pisatin demethylase (515 aa).

Cys-453 is a binding site for heme.

This sequence belongs to the cytochrome P450 family. Heme is required as a cofactor.

In terms of biological role, can detoxify the phytoalexin pisatin from garden pea. Pisatin is an antimicrobial compound produced by pea in response to infection by plant pathogens. The polypeptide is Pisatin demethylase (PDAT9) (Fusarium vanettenii (Neocosmospora pisi)).